The primary structure comprises 396 residues: Elongation factor Tu (396 aa).

The tr-type G domain maps to Lys-10–Val-206. The G1 stretch occupies residues Gly-19–Thr-26. Gly-19–Thr-26 lines the GTP pocket. Thr-26 is a Mg(2+) binding site. Residues Gly-62–Asn-66 form a G2 region. The G3 stretch occupies residues Asp-83–Gly-86. Residues Asp-83–His-87 and Asn-138–Asp-141 each bind GTP. Residues Asn-138–Asp-141 form a G4 region. The tract at residues Ser-176–Leu-178 is G5.

The protein belongs to the TRAFAC class translation factor GTPase superfamily. Classic translation factor GTPase family. EF-Tu/EF-1A subfamily. In terms of assembly, monomer.

It is found in the cytoplasm. The enzyme catalyses GTP + H2O = GDP + phosphate + H(+). Functionally, GTP hydrolase that promotes the GTP-dependent binding of aminoacyl-tRNA to the A-site of ribosomes during protein biosynthesis. This Micrococcus luteus (strain ATCC 4698 / DSM 20030 / JCM 1464 / CCM 169 / CCUG 5858 / IAM 1056 / NBRC 3333 / NCIMB 9278 / NCTC 2665 / VKM Ac-2230) (Micrococcus lysodeikticus) protein is Elongation factor Tu.